A 650-amino-acid chain; its full sequence is Glycoprotein antigen BM86 (650 aa).

The first 19 residues, 1-19 (MRGIALFVAAVSLIVEGTA), serve as a signal peptide directing secretion. 2 EGF-like domains span residues 20–66 (ESSI…KQCE) and 67–104 (YKDTCKTRECSYGRCVESNPSKASCVCEASDDLTLQCK). Intrachain disulfides connect cysteine 24/cysteine 37, cysteine 32/cysteine 49, cysteine 51/cysteine 65, cysteine 71/cysteine 81, cysteine 76/cysteine 91, and cysteine 93/cysteine 103. N-linked (GlcNAc...) asparagine glycosylation is found at asparagine 141 and asparagine 182. EGF-like domains lie at 205 to 247 (CINA…ITCK), 251 to 292 (HTVS…DTCI), and 291 to 335 (CISD…NECL). Cystine bridges form between cysteine 209/cysteine 222, cysteine 218/cysteine 231, cysteine 233/cysteine 246, cysteine 255/cysteine 269, cysteine 263/cysteine 278, cysteine 280/cysteine 291, cysteine 295/cysteine 307, cysteine 300/cysteine 316, and cysteine 318/cysteine 334. N-linked (GlcNAc...) asparagine glycans are attached at residues asparagine 348 and asparagine 382. EGF-like domains are found at residues 482–530 (RRSV…IGCI) and 531–568 (ERTTCNPKEIQECQDKKLECVYKNHKAECECPDDHECY). 6 disulfides stabilise this stretch: cysteine 486-cysteine 500, cysteine 492-cysteine 516, cysteine 518-cysteine 529, cysteine 535-cysteine 550, cysteine 543-cysteine 559, and cysteine 561-cysteine 567. The disordered stretch occupies residues 603–628 (KSEATTAATTTTKAKDKDPDPGKSSA). Residue serine 627 is the site of GPI-anchor amidated serine attachment. A propeptide spans 628 to 650 (AAAVSATGLLLLLAATSVTAASL) (removed in mature form).

It is found in the cell membrane. In Rhipicephalus microplus (Cattle tick), this protein is Glycoprotein antigen BM86.